Here is a 233-residue protein sequence, read N- to C-terminus: 5'-methylthioadenosine/S-adenosylhomocysteine nucleosidase (233 aa).

The Proton acceptor role is filled by Glu12. Substrate contacts are provided by residues Gly78, Ile156, and 177 to 178; that span reads ME. The active-site Proton donor is the Asp201.

The protein belongs to the PNP/UDP phosphorylase family. MtnN subfamily.

The enzyme catalyses S-adenosyl-L-homocysteine + H2O = S-(5-deoxy-D-ribos-5-yl)-L-homocysteine + adenine. It carries out the reaction S-methyl-5'-thioadenosine + H2O = 5-(methylsulfanyl)-D-ribose + adenine. It catalyses the reaction 5'-deoxyadenosine + H2O = 5-deoxy-D-ribose + adenine. Its pathway is amino-acid biosynthesis; L-methionine biosynthesis via salvage pathway; S-methyl-5-thio-alpha-D-ribose 1-phosphate from S-methyl-5'-thioadenosine (hydrolase route): step 1/2. In terms of biological role, catalyzes the irreversible cleavage of the glycosidic bond in both 5'-methylthioadenosine (MTA) and S-adenosylhomocysteine (SAH/AdoHcy) to adenine and the corresponding thioribose, 5'-methylthioribose and S-ribosylhomocysteine, respectively. Also cleaves 5'-deoxyadenosine, a toxic by-product of radical S-adenosylmethionine (SAM) enzymes, into 5-deoxyribose and adenine. The protein is 5'-methylthioadenosine/S-adenosylhomocysteine nucleosidase of Listeria monocytogenes serovar 1/2a (strain ATCC BAA-679 / EGD-e).